The sequence spans 429 residues: Histidinol dehydrogenase (429 aa).

3 residues coordinate NAD(+): Y127, Q188, and N211. Residues S234, Q256, and H259 each contribute to the substrate site. Positions 256 and 259 each coordinate Zn(2+). Residues E324 and H325 each act as proton acceptor in the active site. 4 residues coordinate substrate: H325, D358, E412, and H417. Residue D358 participates in Zn(2+) binding. H417 lines the Zn(2+) pocket.

Belongs to the histidinol dehydrogenase family. Zn(2+) serves as cofactor.

It catalyses the reaction L-histidinol + 2 NAD(+) + H2O = L-histidine + 2 NADH + 3 H(+). Its pathway is amino-acid biosynthesis; L-histidine biosynthesis; L-histidine from 5-phospho-alpha-D-ribose 1-diphosphate: step 9/9. Its function is as follows. Catalyzes the sequential NAD-dependent oxidations of L-histidinol to L-histidinaldehyde and then to L-histidine. In Bacillus cereus (strain ATCC 10987 / NRS 248), this protein is Histidinol dehydrogenase.